Reading from the N-terminus, the 317-residue chain is MTDKLTSLRQITTVVADTGDIAAMKLYQPQDATTNPSLILNAAQIPEYRKLIDEAIAWAREQSSDHAQQIVDATDKLAVNIGLEILKLIPGRISTEVDARLSYDTVASVAKAKRLIKLYNEAGISNDRILIKLASTWQGIRAAEQLEKEGINCNLTLLFSFAQARACAEAGVFLISPFVGRILDWYKANGDKKEFAPHEDPGVVSVTEIYQYYKKHGYKTVVMGASFRNLGEIIELAGCDRLTIAPSLLKELAESEGPVERKLAYTGEVQAKPTPLTEAEFYWQHNQDPMAIDKLADGIRKFAIDQGKLEKMISDLL.

The active-site Schiff-base intermediate with substrate is the Lys132.

The protein belongs to the transaldolase family. Type 1 subfamily. Homodimer.

Its subcellular location is the cytoplasm. The catalysed reaction is D-sedoheptulose 7-phosphate + D-glyceraldehyde 3-phosphate = D-erythrose 4-phosphate + beta-D-fructose 6-phosphate. Its pathway is carbohydrate degradation; pentose phosphate pathway; D-glyceraldehyde 3-phosphate and beta-D-fructose 6-phosphate from D-ribose 5-phosphate and D-xylulose 5-phosphate (non-oxidative stage): step 2/3. Its function is as follows. Transaldolase is important for the balance of metabolites in the pentose-phosphate pathway. The polypeptide is Transaldolase (Yersinia enterocolitica serotype O:8 / biotype 1B (strain NCTC 13174 / 8081)).